A 228-amino-acid chain; its full sequence is tRNA (guanine-N(1)-)-methyltransferase (228 aa).

Residues G111 and 131 to 136 (IGDFIL) each bind S-adenosyl-L-methionine.

It belongs to the RNA methyltransferase TrmD family. Homodimer.

Its subcellular location is the cytoplasm. It carries out the reaction guanosine(37) in tRNA + S-adenosyl-L-methionine = N(1)-methylguanosine(37) in tRNA + S-adenosyl-L-homocysteine + H(+). In terms of biological role, specifically methylates guanosine-37 in various tRNAs. The sequence is that of tRNA (guanine-N(1)-)-methyltransferase from Pelagibacter ubique (strain HTCC1062).